The chain runs to 404 residues: Phosphopentomutase (404 aa).

Residues D10, D303, H308, D344, H345, and H356 each coordinate Mn(2+).

This sequence belongs to the phosphopentomutase family. The cofactor is Mn(2+).

Its subcellular location is the cytoplasm. It catalyses the reaction 2-deoxy-alpha-D-ribose 1-phosphate = 2-deoxy-D-ribose 5-phosphate. It carries out the reaction alpha-D-ribose 1-phosphate = D-ribose 5-phosphate. It participates in carbohydrate degradation; 2-deoxy-D-ribose 1-phosphate degradation; D-glyceraldehyde 3-phosphate and acetaldehyde from 2-deoxy-alpha-D-ribose 1-phosphate: step 1/2. Isomerase that catalyzes the conversion of deoxy-ribose 1-phosphate (dRib-1-P) and ribose 1-phosphate (Rib-1-P) to deoxy-ribose 5-phosphate (dRib-5-P) and ribose 5-phosphate (Rib-5-P), respectively. In Shewanella baltica (strain OS155 / ATCC BAA-1091), this protein is Phosphopentomutase.